The primary structure comprises 468 residues: Protein wingless (468 aa).

An N-terminal signal peptide occupies residues 1 to 17 (MDISYIFVICLMALCSG). Residues 83-106 (VKGANLAISECQHQFRNRRWNCST) are binds porcupine. A disulfide bond links cysteine 93 and cysteine 104. N-linked (GlcNAc...) asparagine glycans are attached at residues asparagine 103 and asparagine 108. 4 cysteine pairs are disulfide-bonded: cysteine 146/cysteine 154, cysteine 156/cysteine 185, cysteine 233/cysteine 247, and cysteine 235/cysteine 242. The O-palmitoleoyl serine; by PORCN moiety is linked to residue serine 239. The tract at residues 333–362 (ISKIHHPNMPSPNSLPQAGQRGGRNGRRQG) is disordered. Cystine bridges form between cysteine 397–cysteine 428, cysteine 413–cysteine 423, cysteine 427–cysteine 467, cysteine 443–cysteine 458, cysteine 445–cysteine 455, and cysteine 450–cysteine 451. Residue asparagine 414 is glycosylated (N-linked (GlcNAc...) asparagine).

Belongs to the Wnt family. In terms of assembly, monomer; folds by intramolecular disulfide bonds. Interacts with porcupine (por). Interacts with wls; in the Golgi. Interacts with en. Interacts with the proteoglycan Cow (heparan sulfate-bound form); this stabilizes wg and promotes its extracellular distribution. Interacts with peg; the interaction facilitates short-range diffusion of wg. Post-translationally, palmitoleoylated by porcupine. The lipid group functions as a sorting signal, targeting the ligand to polarized vesicles that transport wg to unique sites at the cell surface. Depalmitoleoylated by notum, leading to inhibit Wnt signaling pathway. In terms of processing, major form is glycosylated at 2 sites, glycosylation is stimulated by porcupine at the ER. As to expression, segmented expression in embryos. In embryonic tracheal cells, expression is in stripes flanking the tracheal placode.

It is found in the secreted. It localises to the synapse. The protein resides in the membrane. Its subcellular location is the extracellular space. The protein localises to the extracellular matrix. Functionally, binds as a ligand to a family of frizzled seven-transmembrane receptors and acts through a cascade of genes on the nucleus. Segment polarity protein. May be a growth factor. Acts on neighboring cells to regulate at least one gene, the homeobox segmentation gene engrailed. Wg signal represses arm phosphorylation. Wg signaling operates by inactivating the sgg repression of engrailed autoactivation. Wg and Wnt2 have a role in the developing trachea and together are responsible for all dorsal trunk formation. Wg also acts in the developing epidermis. Acts as a morphogen, and diffuses long distances despite its lipidation. Lipophorin is required for diffusion, probably by acting as vehicle for its movement, explaining how it can spread over long distances despite its lipidation. In non-neuronal cells, wls directs wg secretion via clathrin-mediated endocytosis and the retromer complex (a conserved protein complex consisting of Vps26 and Vps35) to sustain a wls traffic loop encompassing the Golgi, the cell surface, an endocytic compartment and a retrograde route leading back to the Golgi. In neuronal cells (the larval motorneuron NMJ), wg signal moves across the synapse through the release of wls-containing exosome-like vesicles. The polypeptide is Protein wingless (wg) (Drosophila melanogaster (Fruit fly)).